The primary structure comprises 412 residues: BURP domain-containing protein 13 (412 aa).

The first 23 residues, Met-1 to Ala-23, serve as a signal peptide directing secretion. The BURP domain maps to Phe-190 to Asn-406. Asn-369 carries N-linked (GlcNAc...) asparagine glycosylation.

As to expression, specifically expressed in anthers, in the tapetum and microspores (at protein level).

In terms of biological role, required for pollen development. Probably synthesized in the tapetum, packaged in Ubisch bodies and transported at appropriate stages to the micropsores. The protein is BURP domain-containing protein 13 (BURP13) of Oryza sativa subsp. japonica (Rice).